The following is a 186-amino-acid chain: Inner membrane-spanning protein YciB (186 aa).

The next 6 helical transmembrane spans lie at 3-23, 24-44, 49-69, 76-96, 121-141, and 149-169; these read FLFDLFPVILFFAAFKVAGIY, VATTVAMVATVAQIAWVWFKH, AMQWLSLLIIVVFGGATLIFH, WKPTVLYWMFGVVLLGSAVLL, LVWSLFFLAMGGLNLYVAYHF, and FKLFGSMGLMVVFILVQSVWL.

It belongs to the YciB family.

The protein resides in the cell inner membrane. Its function is as follows. Plays a role in cell envelope biogenesis, maintenance of cell envelope integrity and membrane homeostasis. This chain is Inner membrane-spanning protein YciB, found in Ralstonia nicotianae (strain ATCC BAA-1114 / GMI1000) (Ralstonia solanacearum).